The following is a 704-amino-acid chain: Elongation factor G 1 (704 aa).

The tr-type G domain maps to 8-291; the sequence is ERYRNIGISA…AVIDYLPSPA (284 aa). GTP-binding positions include 17 to 24, 88 to 92, and 142 to 145; these read AHIDAGKT, DTPGH, and NKMD.

It belongs to the TRAFAC class translation factor GTPase superfamily. Classic translation factor GTPase family. EF-G/EF-2 subfamily.

It localises to the cytoplasm. Its function is as follows. Catalyzes the GTP-dependent ribosomal translocation step during translation elongation. During this step, the ribosome changes from the pre-translocational (PRE) to the post-translocational (POST) state as the newly formed A-site-bound peptidyl-tRNA and P-site-bound deacylated tRNA move to the P and E sites, respectively. Catalyzes the coordinated movement of the two tRNA molecules, the mRNA and conformational changes in the ribosome. The chain is Elongation factor G 1 from Burkholderia mallei (strain ATCC 23344).